Here is a 93-residue protein sequence, read N- to C-terminus: uncharacterized protein (93 aa).

This sequence belongs to the SIMIBI class G3E GTPase family. ArgK/MeaB subfamily.

This is an uncharacterized protein from Streptomyces virginiae (Streptomyces cinnamonensis).